Consider the following 351-residue polypeptide: Peroxidase C1B (351 aa).

The first 28 residues, methionine 1 to alanine 28, serve as a signal peptide directing secretion. Disulfide bonds link cysteine 39–cysteine 119, cysteine 72–cysteine 77, cysteine 125–cysteine 329, and cysteine 205–cysteine 237. Asparagine 41 carries N-linked (GlcNAc...) asparagine glycosylation. Catalysis depends on histidine 70, which acts as the Proton acceptor. Positions 71, 74, 76, 78, and 80 each coordinate Ca(2+). Asparagine 85 is a glycosylation site (N-linked (GlcNAc...) asparagine). Proline 167 is a substrate binding site. Histidine 198 is a binding site for heme b. Threonine 199 provides a ligand contact to Ca(2+). N-linked (GlcNAc...) asparagine glycosylation is found at asparagine 214, asparagine 226, and asparagine 242. Positions 250, 253, and 258 each coordinate Ca(2+). Asparagine 283 carries N-linked (GlcNAc...) asparagine glycosylation.

It belongs to the peroxidase family. Classical plant (class III) peroxidase subfamily. Ca(2+) serves as cofactor. The cofactor is heme b.

It localises to the secreted. It is found in the vacuole. It catalyses the reaction 2 a phenolic donor + H2O2 = 2 a phenolic radical donor + 2 H2O. Functionally, removal of H(2)O(2), oxidation of toxic reductants, biosynthesis and degradation of lignin, suberization, auxin catabolism, response to environmental stresses such as wounding, pathogen attack and oxidative stress. These functions might be dependent on each isozyme/isoform in each plant tissue. This is Peroxidase C1B (PRXC1B) from Armoracia rusticana (Horseradish).